A 215-amino-acid polypeptide reads, in one-letter code: Myelin protein zero-like protein 2 (215 aa).

The signal sequence occupies residues 1-26 (MYGKSSTRAVLLLLGIQLTALWPIAA). The 115-residue stretch at 27–141 (VEIYTSRVLE…DGVIGEIRLS (115 aa)) folds into the Ig-like V-type domain. The Extracellular segment spans residues 27–154 (VEIYTSRVLE…TVRFSEIHFL (128 aa)). N-linked (GlcNAc...) asparagine glycosylation is found at N39 and N118. Cysteines 47 and 123 form a disulfide. Residues 155–175 (ALAIGSACALMIIIVIVVVLF) form a helical membrane-spanning segment. Topologically, residues 176 to 215 (QHYRKKRWAERAHKVVEIKSKEEERLNQEKKVSVYLEDTD) are cytoplasmic.

The protein belongs to the myelin P0 protein family. As to expression, widely expressed. In fetal tissues, highest expression in the inner ear. In adult tissues, highest levels in thymus and lung.

The protein resides in the membrane. Mediates homophilic cell-cell adhesion. The protein is Myelin protein zero-like protein 2 (MPZL2) of Homo sapiens (Human).